We begin with the raw amino-acid sequence, 520 residues long: Sodium-dependent dicarboxylate transporter SdcS (520 aa).

Helical transmembrane passes span 30–50 (TGQL…LLFF), 55–75 (LPWK…WWIT), 77–97 (AIPI…GHIL), 104–124 (SEYG…AIAM), 160–180 (SMFV…LAII), 207–227 (IGYA…PLII), 242–262 (FAKW…ITWL), 298–318 (KVVQ…EFLL), 323–343 (VTSS…LFII), 362–382 (ELPW…KGIS), 399–419 (GVSP…LTEV), 428–448 (MILP…LLLM), 452–472 (AMAA…AIIF), and 491–511 (LISA…VLGI).

The protein belongs to the SLC13A/DASS transporter (TC 2.A.47) family. NADC subfamily.

Its subcellular location is the cell membrane. Mediates the transport of the dicarboxylates fumarate, malate, and succinate across the cytoplasmic membrane via a Na(+)-electrochemical gradient. This chain is Sodium-dependent dicarboxylate transporter SdcS (sdcS), found in Staphylococcus aureus (strain MRSA252).